Reading from the N-terminus, the 149-residue chain is Putative pre-16S rRNA nuclease (149 aa).

It belongs to the YqgF nuclease family.

It localises to the cytoplasm. Its function is as follows. Could be a nuclease involved in processing of the 5'-end of pre-16S rRNA. In Pseudoalteromonas translucida (strain TAC 125), this protein is Putative pre-16S rRNA nuclease.